We begin with the raw amino-acid sequence, 443 residues long: Chromosome partition protein MukF (443 aa).

A leucine-zipper region spans residues 209–237 (LDETSINLRELQDTLNAAGDKLQSQLLRI).

Belongs to the MukF family. Interacts, and probably forms a ternary complex, with MukE and MukB via its C-terminal region. The complex formation is stimulated by calcium or magnesium. It is required for an interaction between MukE and MukB.

The protein resides in the cytoplasm. The protein localises to the nucleoid. Its function is as follows. Involved in chromosome condensation, segregation and cell cycle progression. May participate in facilitating chromosome segregation by condensation DNA from both sides of a centrally located replisome during cell division. Not required for mini-F plasmid partitioning. Probably acts via its interaction with MukB and MukE. Overexpression results in anucleate cells. It has a calcium binding activity. The sequence is that of Chromosome partition protein MukF from Haemophilus ducreyi (strain 35000HP / ATCC 700724).